A 32-amino-acid chain; its full sequence is Photosystem I reaction center subunit XII (32 aa).

A helical membrane pass occupies residues 3–23 (SISDGQIVVALISAFIIVILA).

The protein belongs to the PsaM family.

The protein resides in the plastid. It localises to the chloroplast thylakoid membrane. This Anthoceros angustus (Hornwort) protein is Photosystem I reaction center subunit XII.